Here is a 497-residue protein sequence, read N- to C-terminus: Long chain base biosynthesis protein 2c (497 aa).

Residues 4–24 traverse the membrane as a helical segment; the sequence is VPFVTAVTTVFSYGVIFGFGH. Lysine 319 carries the post-translational modification N6-(pyridoxal phosphate)lysine.

This sequence belongs to the class-II pyridoxal-phosphate-dependent aminotransferase family. As to quaternary structure, heterodimer with LCB1. Component of the serine palmitoyltransferase (SPT) complex, composed of LCB1 and LCB2. Pyridoxal 5'-phosphate is required as a cofactor.

It is found in the endoplasmic reticulum membrane. The enzyme catalyses L-serine + hexadecanoyl-CoA + H(+) = 3-oxosphinganine + CO2 + CoA. The protein operates within lipid metabolism; sphingolipid metabolism. Functionally, serine palmitoyltransferase (SPT). The heterodimer formed with LCB1 constitutes the catalytic core. The chain is Long chain base biosynthesis protein 2c from Oryza sativa subsp. japonica (Rice).